An 806-amino-acid chain; its full sequence is Minor extracellular protease Vpr (806 aa).

The N-terminal stretch at 1-28 (MKKGIIRFLLVSFVLFFALSTGITGVQA) is a signal peptide. Positions 29 to 160 (APASSKTSAD…TISEDAVSPQ (132 aa)) are excised as a propeptide. In terms of domain architecture, Inhibitor I9 spans 57–142 (TVIVELKEKS…AVYPNVTYKT (86 aa)). The Peptidase S8 domain maps to 158-597 (SPQMDDSAPY…ARIMNAIKAD (440 aa)). Active-site charge relay system residues include Asp-189 and His-233. The 79-residue stretch at 383–461 (ELVEAGIGEA…KLSLEDGEKL (79 aa)) folds into the PA domain. The Charge relay system role is filled by Ser-534.

This sequence belongs to the peptidase S8 family. Probably undergoes C-terminal processing or proteolysis. Auto-processed to form active enzymes of several different molecular weights.

It localises to the secreted. The protein localises to the cell wall. Activity is inhibited by phenylmethylsulfonyl fluoride (PMSF), but not by EDTA. Functionally, serine protease. Involved in the production of the competence and sporulation stimulating factor CSF. Is directly involved in the processing of pro-CSF to CSF. Can also cleave pro-PhrA to PhrA, but cannot cleave pro-PhrE. Shows fibrinolytic activity in vitro. Not essential for growth or sporulation. In Bacillus subtilis (strain 168), this protein is Minor extracellular protease Vpr.